Reading from the N-terminus, the 553-residue chain is uncharacterized protein (553 aa).

A signal peptide spans 1–28 (MRYARHASRYSLFTLAVSAALLPGAGWA).

This is an uncharacterized protein from Pseudomonas aeruginosa (strain ATCC 15692 / DSM 22644 / CIP 104116 / JCM 14847 / LMG 12228 / 1C / PRS 101 / PAO1).